A 576-amino-acid polypeptide reads, in one-letter code: 4-alpha-glucanotransferase DPE1, chloroplastic/amyloplastic (576 aa).

Residues 1-45 (MSILLRPSSSPSLCSSLKLFRLSSPDSLIDAAVLRNRTKPSQSFR) constitute a chloroplast transit peptide.

It belongs to the disproportionating enzyme family.

The protein resides in the plastid. It is found in the chloroplast. The protein localises to the amyloplast. It catalyses the reaction Transfers a segment of a (1-&gt;4)-alpha-D-glucan to a new position in an acceptor, which may be glucose or a (1-&gt;4)-alpha-D-glucan.. In terms of biological role, chloroplastic alpha-glucanotransferase involved in maltotriose metabolism. Probably uses maltotriose as substrate to transfer a maltosyl unit from one molecule to another, resulting in glucose and maltopentaose. The latter can then be further metabolized to maltose and maltotriose by beta-amylase. Required for normal starch degradation in leaves. In Arabidopsis thaliana (Mouse-ear cress), this protein is 4-alpha-glucanotransferase DPE1, chloroplastic/amyloplastic (DPE1).